The sequence spans 296 residues: ATP phosphoribosyltransferase (296 aa).

The protein belongs to the ATP phosphoribosyltransferase family. Long subfamily. It depends on Mg(2+) as a cofactor.

Its subcellular location is the cytoplasm. The catalysed reaction is 1-(5-phospho-beta-D-ribosyl)-ATP + diphosphate = 5-phospho-alpha-D-ribose 1-diphosphate + ATP. It functions in the pathway amino-acid biosynthesis; L-histidine biosynthesis; L-histidine from 5-phospho-alpha-D-ribose 1-diphosphate: step 1/9. Its activity is regulated as follows. Feedback inhibited by histidine. Functionally, catalyzes the condensation of ATP and 5-phosphoribose 1-diphosphate to form N'-(5'-phosphoribosyl)-ATP (PR-ATP). Has a crucial role in the pathway because the rate of histidine biosynthesis seems to be controlled primarily by regulation of HisG enzymatic activity. This chain is ATP phosphoribosyltransferase, found in Halorubrum lacusprofundi (strain ATCC 49239 / DSM 5036 / JCM 8891 / ACAM 34).